Consider the following 84-residue polypeptide: uncharacterized protein (84 aa).

This is an uncharacterized protein from Orgyia pseudotsugata (Douglas-fir tussock moth).